We begin with the raw amino-acid sequence, 420 residues long: Light-independent protochlorophyllide reductase subunit N (420 aa).

3 residues coordinate [4Fe-4S] cluster: C21, C46, and C103.

Belongs to the BchN/ChlN family. As to quaternary structure, protochlorophyllide reductase is composed of three subunits; BchL, BchN and BchB. Forms a heterotetramer of two BchB and two BchN subunits. It depends on [4Fe-4S] cluster as a cofactor.

The catalysed reaction is chlorophyllide a + oxidized 2[4Fe-4S]-[ferredoxin] + 2 ADP + 2 phosphate = protochlorophyllide a + reduced 2[4Fe-4S]-[ferredoxin] + 2 ATP + 2 H2O. The protein operates within porphyrin-containing compound metabolism; bacteriochlorophyll biosynthesis (light-independent). Functionally, component of the dark-operative protochlorophyllide reductase (DPOR) that uses Mg-ATP and reduced ferredoxin to reduce ring D of protochlorophyllide (Pchlide) to form chlorophyllide a (Chlide). This reaction is light-independent. The NB-protein (BchN-BchB) is the catalytic component of the complex. In Chlorobium phaeobacteroides (strain DSM 266 / SMG 266 / 2430), this protein is Light-independent protochlorophyllide reductase subunit N.